Reading from the N-terminus, the 149-residue chain is Transcriptional repressor NrdR (149 aa).

Residues 3–34 (CPFCGHLETQVVETRISEDAEFIRRRRQCGAC) fold into a zinc finger. One can recognise an ATP-cone domain in the interval 49-139 (PSIVKKDGRR…VYRSFEDIDE (91 aa)).

This sequence belongs to the NrdR family. Requires Zn(2+) as cofactor.

In terms of biological role, negatively regulates transcription of bacterial ribonucleotide reductase nrd genes and operons by binding to NrdR-boxes. The polypeptide is Transcriptional repressor NrdR (Polaromonas naphthalenivorans (strain CJ2)).